A 397-amino-acid polypeptide reads, in one-letter code: Tryptophan synthase beta chain (397 aa).

An N6-(pyridoxal phosphate)lysine modification is found at Lys91.

The protein belongs to the TrpB family. In terms of assembly, tetramer of two alpha and two beta chains. Pyridoxal 5'-phosphate serves as cofactor.

It carries out the reaction (1S,2R)-1-C-(indol-3-yl)glycerol 3-phosphate + L-serine = D-glyceraldehyde 3-phosphate + L-tryptophan + H2O. Its pathway is amino-acid biosynthesis; L-tryptophan biosynthesis; L-tryptophan from chorismate: step 5/5. In terms of biological role, the beta subunit is responsible for the synthesis of L-tryptophan from indole and L-serine. The chain is Tryptophan synthase beta chain from Bacillus cereus (strain Q1).